We begin with the raw amino-acid sequence, 165 residues long: Putative pre-16S rRNA nuclease (165 aa).

Belongs to the YqgF nuclease family.

It is found in the cytoplasm. In terms of biological role, could be a nuclease involved in processing of the 5'-end of pre-16S rRNA. The protein is Putative pre-16S rRNA nuclease of Rhizobium meliloti (strain 1021) (Ensifer meliloti).